The sequence spans 160 residues: Crossover junction endodeoxyribonuclease RuvC (160 aa).

Catalysis depends on residues Asp-7, Glu-67, and Asp-138. Mg(2+)-binding residues include Asp-7, Glu-67, and Asp-138.

This sequence belongs to the RuvC family. Homodimer which binds Holliday junction (HJ) DNA. The HJ becomes 2-fold symmetrical on binding to RuvC with unstacked arms; it has a different conformation from HJ DNA in complex with RuvA. In the full resolvosome a probable DNA-RuvA(4)-RuvB(12)-RuvC(2) complex forms which resolves the HJ. Mg(2+) is required as a cofactor.

It is found in the cytoplasm. The catalysed reaction is Endonucleolytic cleavage at a junction such as a reciprocal single-stranded crossover between two homologous DNA duplexes (Holliday junction).. Functionally, the RuvA-RuvB-RuvC complex processes Holliday junction (HJ) DNA during genetic recombination and DNA repair. Endonuclease that resolves HJ intermediates. Cleaves cruciform DNA by making single-stranded nicks across the HJ at symmetrical positions within the homologous arms, yielding a 5'-phosphate and a 3'-hydroxyl group; requires a central core of homology in the junction. The consensus cleavage sequence is 5'-(A/T)TT(C/G)-3'. Cleavage occurs on the 3'-side of the TT dinucleotide at the point of strand exchange. HJ branch migration catalyzed by RuvA-RuvB allows RuvC to scan DNA until it finds its consensus sequence, where it cleaves and resolves the cruciform DNA. This chain is Crossover junction endodeoxyribonuclease RuvC, found in Brachyspira hyodysenteriae (strain ATCC 49526 / WA1).